Reading from the N-terminus, the 192-residue chain is NADH dehydrogenase [ubiquinone] iron-sulfur protein 3 (192 aa).

Belongs to the complex I 30 kDa subunit family. As to quaternary structure, complex I is composed of about 45 different subunits. This is a component of the iron-sulfur (IP) fragment of the enzyme.

The protein resides in the mitochondrion inner membrane. It catalyses the reaction a ubiquinone + NADH + 5 H(+)(in) = a ubiquinol + NAD(+) + 4 H(+)(out). Its function is as follows. Core subunit of the mitochondrial membrane respiratory chain NADH dehydrogenase (Complex I) that is believed to belong to the minimal assembly required for catalysis. Complex I functions in the transfer of electrons from NADH to the respiratory chain. The immediate electron acceptor for the enzyme is believed to be ubiquinone. This is NADH dehydrogenase [ubiquinone] iron-sulfur protein 3 (NAD9) from Beta vulgaris (Sugar beet).